A 296-amino-acid chain; its full sequence is 4-hydroxybenzoate octaprenyltransferase (296 aa).

8 consecutive transmembrane segments (helical) span residues 29–49 (IGIY…ADGV), 55–75 (LLIF…INDF), 102–122 (AWIT…LTNA), 146–166 (YYPQ…AFTA), 169–189 (GELP…TVAY), 219–239 (LIIG…GNRF), 241–261 (LGLC…WEAW), and 275–295 (FLHN…DYAL).

The protein belongs to the UbiA prenyltransferase family. Mg(2+) is required as a cofactor.

It localises to the cell inner membrane. It carries out the reaction all-trans-octaprenyl diphosphate + 4-hydroxybenzoate = 4-hydroxy-3-(all-trans-octaprenyl)benzoate + diphosphate. Its pathway is cofactor biosynthesis; ubiquinone biosynthesis. Functionally, catalyzes the prenylation of para-hydroxybenzoate (PHB) with an all-trans polyprenyl group. Mediates the second step in the final reaction sequence of ubiquinone-8 (UQ-8) biosynthesis, which is the condensation of the polyisoprenoid side chain with PHB, generating the first membrane-bound Q intermediate 3-octaprenyl-4-hydroxybenzoate. In Pseudomonas aeruginosa (strain LESB58), this protein is 4-hydroxybenzoate octaprenyltransferase.